We begin with the raw amino-acid sequence, 692 residues long: Ribonuclease R (692 aa).

The RNB domain maps to 204–525; it reads RKDLRDLLCF…IVHRLLFHPL (322 aa). The S1 motif domain occupies 563–648; it reads KKFLDEQPAT…LTQAIEWTLI (86 aa). Residues 651–692 are disordered; the sequence is KERSSSKKKKAKAKSNATQVKKKSSSKKKKAVSKAKKNRGGK. Over residues 670 to 692 the composition is skewed to basic residues; sequence VKKKSSSKKKKAVSKAKKNRGGK.

The protein belongs to the RNR ribonuclease family. RNase R subfamily.

It localises to the cytoplasm. It catalyses the reaction Exonucleolytic cleavage in the 3'- to 5'-direction to yield nucleoside 5'-phosphates.. Its function is as follows. 3'-5' exoribonuclease that releases 5'-nucleoside monophosphates and is involved in maturation of structured RNAs. The polypeptide is Ribonuclease R (Chlamydia muridarum (strain MoPn / Nigg)).